The chain runs to 947 residues: Cell adhesion molecule CEACAM5 (947 aa).

A signal peptide spans 1 to 34 (MEASSVLPCKWCTHLQGLLLTASFLTCCHLPTTA). Ig-like V-type domains are found at residues 35 to 132 (QITI…EIVS), 166 to 259 (SEGG…VQLY), 270 to 378 (PLQV…LHVN), 392 to 498 (RLSI…LQLD), 509 to 615 (QVKI…LHVN), 642 to 733 (GESV…VQLQ), and 746 to 851 (DQLI…VQVH). N-linked (GlcNAc...) asparagine glycosylation is found at N57, N103, N110, N207, N224, N341, N461, N472, N578, N698, N709, N816, and N823. One can recognise an Ig-like C2-type 1 domain in the interval 859–943 (PFVRVTDTTV…SKSSLPVRLA (85 aa)). C878 and C926 form a disulfide bridge.

The protein belongs to the immunoglobulin superfamily. CEA family. In terms of assembly, homodimer.

It localises to the cell membrane. The protein localises to the apical cell membrane. It is found in the cell surface. In terms of biological role, cell surface glycoprotein that plays a role in cell adhesion, intracellular signaling and tumor progression. Mediates homophilic and heterophilic cell adhesion with other carcinoembryonic antigen-related cell adhesion molecules, such as CEACAM6. Plays a role as an oncogene by promoting tumor progression; induces resistance to anoikis of colorectal carcinoma cells. This chain is Cell adhesion molecule CEACAM5, found in Mus musculus (Mouse).